A 582-amino-acid chain; its full sequence is Potassium-transporting ATPase potassium-binding subunit (582 aa).

Transmembrane regions (helical) follow at residues Leu-6–Tyr-26, Ile-65–Glu-85, Leu-87–Val-107, Gly-136–Ile-156, Val-178–Val-198, Leu-277–Ile-297, Leu-304–Ala-324, Gly-402–Gly-422, Ala-441–Ile-461, Ile-505–Leu-525, and Gly-546–Val-566.

The protein belongs to the KdpA family. As to quaternary structure, the system is composed of three essential subunits: KdpA, KdpB and KdpC.

Its subcellular location is the cell inner membrane. Part of the high-affinity ATP-driven potassium transport (or Kdp) system, which catalyzes the hydrolysis of ATP coupled with the electrogenic transport of potassium into the cytoplasm. This subunit binds the periplasmic potassium ions and delivers the ions to the membrane domain of KdpB through an intramembrane tunnel. The chain is Potassium-transporting ATPase potassium-binding subunit from Solidesulfovibrio magneticus (strain ATCC 700980 / DSM 13731 / RS-1) (Desulfovibrio magneticus).